The chain runs to 502 residues: C2H2-type transcription factor MSN2 (502 aa).

2 C2H2-type zinc fingers span residues 385-408 (FVCHLCTRRFRRQEHLKRHFRSLH) and 414-436 (FACGECGKKFSRSDNLTQHSRIH).

It localises to the nucleus. Its function is as follows. Key downstream transcription factor in the HOG1-MAPK pathway. Plays crucial roles in the regulation of growth, conidiation, trap development and fatty acid metabolism. Negatively regulates secondary metabolism such as arthrobotrisins biosynthesis.Also regulates autophagy and endocytosis. The sequence is that of C2H2-type transcription factor MSN2 from Arthrobotrys oligospora (strain ATCC 24927 / CBS 115.81 / DSM 1491) (Nematode-trapping fungus).